A 502-amino-acid polypeptide reads, in one-letter code: MFRQAKWDEPLIFELSRPGRVGYTLPKPIEDIKVDIPEKLRRKSKLELPELSEPEIVKHYTRLSEMNYGVDSGIYPLGSCTMKYNPKINEEIATHPKVAYIHPYQDERTVQGALAIMWELEQWLKEITGMDRFTLQPAAGANGEFTGVMIIRAYHLDNGEPQRNEMLVPDSAHGTNPASAAMAGFKVIEIPSNENGTIDLEALENAVSERTAGLMLTNPNTLGIFEDEIVEIAKIIHKAGGLLYYDGANLNGILGKIRPGDMGFDIVHLNLHKTFSTPHGGGGPGAGPVGVKEFLKDYLPVPLVSYDEKSGRYYLDYNVPKSIGKVKELYGNFAVLVRALTYLKIMGRDGLREVSEIAVLNANYLTQKLKGTRGYSLPGKELRKHEVVFSAEPMKKETGVKALDVAKRLLDFGMHAPTIYFPLIVHEALMIEPTETVSKEELDAYVEALKRISEEAYTNPEIVKSAPHNTAVKRVDDVLAAKKPIVTWRMYKELKEKGEVDY.

At Lys-273 the chain carries N6-(pyridoxal phosphate)lysine.

This sequence belongs to the GcvP family. C-terminal subunit subfamily. The glycine cleavage system is composed of four proteins: P, T, L and H. In this organism, the P 'protein' is a heterodimer of two subunits. The cofactor is pyridoxal 5'-phosphate.

It carries out the reaction N(6)-[(R)-lipoyl]-L-lysyl-[glycine-cleavage complex H protein] + glycine + H(+) = N(6)-[(R)-S(8)-aminomethyldihydrolipoyl]-L-lysyl-[glycine-cleavage complex H protein] + CO2. In terms of biological role, the glycine cleavage system catalyzes the degradation of glycine. The P protein binds the alpha-amino group of glycine through its pyridoxal phosphate cofactor; CO(2) is released and the remaining methylamine moiety is then transferred to the lipoamide cofactor of the H protein. In Pyrococcus furiosus (strain ATCC 43587 / DSM 3638 / JCM 8422 / Vc1), this protein is Probable glycine dehydrogenase (decarboxylating) subunit 2.